The primary structure comprises 110 residues: Large ribosomal subunit protein uL22 (110 aa).

It belongs to the universal ribosomal protein uL22 family. In terms of assembly, part of the 50S ribosomal subunit.

Functionally, this protein binds specifically to 23S rRNA; its binding is stimulated by other ribosomal proteins, e.g. L4, L17, and L20. It is important during the early stages of 50S assembly. It makes multiple contacts with different domains of the 23S rRNA in the assembled 50S subunit and ribosome. Its function is as follows. The globular domain of the protein is located near the polypeptide exit tunnel on the outside of the subunit, while an extended beta-hairpin is found that lines the wall of the exit tunnel in the center of the 70S ribosome. The sequence is that of Large ribosomal subunit protein uL22 from Variovorax paradoxus (strain S110).